Here is a 188-residue protein sequence, read N- to C-terminus: Pro-adrenomedullin (188 aa).

An N-terminal signal peptide occupies residues methionine 1 to threonine 21. At arginine 41 the chain carries Arginine amide. A propeptide spanning residues glutamate 45–valine 92 is cleaved from the precursor. The disordered stretch occupies residues arginine 69 to arginine 89. Cysteine 110 and cysteine 115 are disulfide-bonded. Positions aspartate 129–proline 175 are disordered. Tyrosine amide is present on tyrosine 146. The propeptide at serine 153–isoleucine 188 is preproAM C-terminal fragment.

The protein belongs to the adrenomedullin family.

The protein resides in the secreted. In terms of biological role, adrenomedullin/ADM and proadrenomedullin N-20 terminal peptide/PAMP are peptide hormones that act as potent hypotensive and vasodilatator agents. Numerous actions have been reported most related to the physiologic control of fluid and electrolyte homeostasis. Functionally, ADM function is mediated by the CALCRL-RAMP2 and CALCRL-RAMP3 receptor complexes with ADM showing the highest potency for the CALCRL-RAMP2 complex. In Bos taurus (Bovine), this protein is Pro-adrenomedullin (ADM).